The primary structure comprises 63 residues: Large ribosomal subunit protein bL28 (63 aa).

Belongs to the bacterial ribosomal protein bL28 family.

This Geotalea daltonii (strain DSM 22248 / JCM 15807 / FRC-32) (Geobacter daltonii) protein is Large ribosomal subunit protein bL28.